Here is a 406-residue protein sequence, read N- to C-terminus: Phosphoglycerate kinase (406 aa).

Residues 22 to 24 (DLN), Arg37, 60 to 63 (HLGN), Arg119, and Arg152 contribute to the substrate site. ATP contacts are provided by residues Lys202, Glu325, and 355-358 (GGDT).

This sequence belongs to the phosphoglycerate kinase family. As to quaternary structure, monomer.

The protein localises to the cytoplasm. It catalyses the reaction (2R)-3-phosphoglycerate + ATP = (2R)-3-phospho-glyceroyl phosphate + ADP. It participates in carbohydrate degradation; glycolysis; pyruvate from D-glyceraldehyde 3-phosphate: step 2/5. In Orientia tsutsugamushi (strain Ikeda) (Rickettsia tsutsugamushi), this protein is Phosphoglycerate kinase.